Reading from the N-terminus, the 408-residue chain is Argininosuccinate synthase (408 aa).

ATP contacts are provided by residues 11-19 and Ala-38; that span reads AYSGGLDTS. Residues Tyr-91 and Ser-96 each coordinate L-citrulline. Position 121 (Gly-121) interacts with ATP. Positions 123, 127, and 128 each coordinate L-aspartate. Residue Asn-127 coordinates L-citrulline. L-citrulline contacts are provided by Arg-131, Ser-182, Ser-191, Glu-267, and Tyr-279.

Belongs to the argininosuccinate synthase family. Type 1 subfamily. As to quaternary structure, homotetramer.

Its subcellular location is the cytoplasm. It catalyses the reaction L-citrulline + L-aspartate + ATP = 2-(N(omega)-L-arginino)succinate + AMP + diphosphate + H(+). It participates in amino-acid biosynthesis; L-arginine biosynthesis; L-arginine from L-ornithine and carbamoyl phosphate: step 2/3. The chain is Argininosuccinate synthase from Azorhizobium caulinodans (strain ATCC 43989 / DSM 5975 / JCM 20966 / LMG 6465 / NBRC 14845 / NCIMB 13405 / ORS 571).